We begin with the raw amino-acid sequence, 247 residues long: Coiled-coil domain-containing protein 124 homolog (247 aa).

The segment at 1-146 is disordered; it reads MGGKKFGTNS…TTTTGSDDHE (146 aa). The stretch at 8–85 forms a coiled coil; it reads TNSKAEEARS…QEDKEIKERY (78 aa). The span at 11-114 shows a compositional bias: basic and acidic residues; the sequence is KAEEARSKKA…EQKQREKELA (104 aa). Positions 122–140 are enriched in low complexity; it reads VVVVPTTTTTTTTTTTTTT.

It belongs to the CCDC124 family. Associates with translationally inactive ribosomes in the nonrotated state.

Ribosome-binding protein involved in ribosome hibernation: associates with translationally inactive ribosomes and stabilizes the nonrotated conformation of the 80S ribosome, thereby promoting ribosome preservation and storage. The protein is Coiled-coil domain-containing protein 124 homolog of Dictyostelium discoideum (Social amoeba).